The primary structure comprises 305 residues: Glycine--tRNA ligase alpha subunit (305 aa).

Belongs to the class-II aminoacyl-tRNA synthetase family. In terms of assembly, tetramer of two alpha and two beta subunits.

Its subcellular location is the cytoplasm. The enzyme catalyses tRNA(Gly) + glycine + ATP = glycyl-tRNA(Gly) + AMP + diphosphate. The polypeptide is Glycine--tRNA ligase alpha subunit (Streptococcus pneumoniae (strain ATCC BAA-255 / R6)).